The chain runs to 55 residues: Seripauperin-7 (55 aa).

An N-terminal signal peptide occupies residues Met1 to Ala20.

This sequence belongs to the SRP1/TIP1 family. Seripauperin subfamily.

In Saccharomyces cerevisiae (strain ATCC 204508 / S288c) (Baker's yeast), this protein is Seripauperin-7 (PAU7).